A 305-amino-acid chain; its full sequence is MSKKLTFQEIILTLQRFWNDQGCMLMQAYDNEKGAGTMSPYTFLRAIGPEPWNAAYVEPSRRPADGRYGENPNRLYQHHQFQVVMKPSPSNIQELYLESLEKLGINPLEHDIRFVEDNWENPSTGSAGLGWEVWLDGMEITQFTYFQQVGGLATGPVTAEVTYGLERLASYIQEVDSVYDIEWADGVKYGEIFIQPEYEHSKYSFEISDQEMLLENFDKFEKEAGRALEEGLVHPAYDYVLKCSHTFNLLDARGAVSVTERAGYIARIRNLARVVAKTFVAERKRLGYPLLDEETRAKLLAEDAE.

Belongs to the class-II aminoacyl-tRNA synthetase family. Tetramer of two alpha and two beta subunits.

It is found in the cytoplasm. The enzyme catalyses tRNA(Gly) + glycine + ATP = glycyl-tRNA(Gly) + AMP + diphosphate. The polypeptide is Glycine--tRNA ligase alpha subunit (Streptococcus pneumoniae (strain CGSP14)).